The chain runs to 338 residues: Acetoin:2,6-dichlorophenolindophenol oxidoreductase subunit beta (338 aa).

As to quaternary structure, tetramer of 2 alpha and 2 beta subunits.

The protein operates within ketone degradation; acetoin degradation. Catalyzes the 2,6-dichlorophenolindophenol-dependent cleavage of acetoin into acetate and acetaldehyde, in vitro. The beta subunit is probably not the catalytic subunit of the enzyme. This is Acetoin:2,6-dichlorophenolindophenol oxidoreductase subunit beta (acoB) from Cupriavidus necator (strain ATCC 17699 / DSM 428 / KCTC 22496 / NCIMB 10442 / H16 / Stanier 337) (Ralstonia eutropha).